Consider the following 200-residue polypeptide: Putative 3-methyladenine DNA glycosylase (200 aa).

This sequence belongs to the DNA glycosylase MPG family.

The chain is Putative 3-methyladenine DNA glycosylase from Rhodopseudomonas palustris (strain BisB18).